The primary structure comprises 346 residues: DNA-directed RNA polymerases I and III subunit RPAC1 (346 aa).

A2 carries the N-acetylalanine modification. S4 bears the Phosphoserine mark.

Belongs to the archaeal Rpo3/eukaryotic RPB3 RNA polymerase subunit family. As to quaternary structure, component of the RNA polymerase I and RNA polymerase III complexes consisting of at least 13 and 17 subunits, respectively. Pol I complex consists of a ten-subunit catalytic core composed of POLR1A/RPA1, POLR1B/RPA2, POLR1C/RPAC1, POLR1D/RPAC2, POLR1H/RPA12, POLR2E/RPABC1, POLR2F/RPABC2, POLR2H/RPABC3, POLR2K/RPABC4 and POLR2L/RPABC5; a mobile stalk subunit POLR1F/RPA43 protruding from the core and additional subunits homologous to general transcription factors POLR1E/RPA49 and POLR1G/RPA34. Part of Pol I pre-initiation complex (PIC), in which Pol I core assembles with RRN3 and promoter-bound UTBF and SL1/TIF-IB complex. Pol III complex consists of a ten-subunit catalytic core composed of POLR3A/RPC1, POLR3B/RPC2, POLR1C/RPAC1, POLR1D/RPAC2, POLR3K/RPC10, POLR2E/RPABC1, POLR2F/RPABC2, POLR2H/RPABC3, POLR2K/RPABC4 and POLR2L/RPABC5; a mobile stalk composed of two subunits POLR3H/RPC8 and CRCP/RPC9, protruding from the core and functioning primarily in transcription initiation; and additional subunits homologous to general transcription factors of the RNA polymerase II machinery, POLR3C/RPC3-POLR3F/RPC6-POLR3G/RPC7 heterotrimer required for transcription initiation and POLR3D/RPC4-POLR3E/RPC5 heterodimer involved in both transcription initiation and termination.

It localises to the nucleus. The protein resides in the nucleolus. Its subcellular location is the cytoplasm. The protein localises to the cytosol. Functionally, DNA-dependent RNA polymerase catalyzes the transcription of DNA into RNA using the four ribonucleoside triphosphates as substrates. Common component of RNA polymerases I and III which synthesize ribosomal RNA precursors and short non-coding RNAs including 5S rRNA, snRNAs, tRNAs and miRNAs, respectively. POLR1C/RPAC1 is part of the polymerase core and may function as a clamp element that moves to open and close the cleft. The polypeptide is DNA-directed RNA polymerases I and III subunit RPAC1 (Homo sapiens (Human)).